Reading from the N-terminus, the 91-residue chain is Small ribosomal subunit protein bS20 (91 aa).

It belongs to the bacterial ribosomal protein bS20 family.

Its function is as follows. Binds directly to 16S ribosomal RNA. The chain is Small ribosomal subunit protein bS20 from Acidithiobacillus ferrooxidans (strain ATCC 23270 / DSM 14882 / CIP 104768 / NCIMB 8455) (Ferrobacillus ferrooxidans (strain ATCC 23270)).